The primary structure comprises 396 residues: Deoxyguanosinetriphosphate triphosphohydrolase-like protein (396 aa).

One can recognise an HD domain in the interval 69–211 (RLSHSLEVSQ…AALADDIAYN (143 aa)).

This sequence belongs to the dGTPase family. Type 2 subfamily.

This is Deoxyguanosinetriphosphate triphosphohydrolase-like protein from Parvibaculum lavamentivorans (strain DS-1 / DSM 13023 / NCIMB 13966).